A 502-amino-acid chain; its full sequence is Probable malate:quinone oxidoreductase (502 aa).

The protein belongs to the MQO family. FAD is required as a cofactor.

It carries out the reaction (S)-malate + a quinone = a quinol + oxaloacetate. It participates in carbohydrate metabolism; tricarboxylic acid cycle; oxaloacetate from (S)-malate (quinone route): step 1/1. The chain is Probable malate:quinone oxidoreductase from Parasynechococcus marenigrum (strain WH8102).